A 359-amino-acid chain; its full sequence is Probably inactive receptor-like protein kinase At5g41680 (359 aa).

One can recognise a Protein kinase domain in the interval 59–357 (AASAEILGKG…KLIQDIPTNF (299 aa)). ATP contacts are provided by residues 65 to 73 (LGKGAHVTT) and Lys-87.

The protein belongs to the protein kinase superfamily. Ser/Thr protein kinase family.

The polypeptide is Probably inactive receptor-like protein kinase At5g41680 (Arabidopsis thaliana (Mouse-ear cress)).